A 348-amino-acid polypeptide reads, in one-letter code: MNTRVGTIGNASLLTADAHPMIDPFGRAVTYLRVSVTDRCDFRCTYCMAENMTFLPKKDLLTLEELDRLCSAFVAKGVKKIRLTGGEPLVRKNIMYLVRRLGEKIGAGLDEVTLTTNGSQLSRHAEELYDCGVRRINVSLDTLDPDKFRKITRWGDFAKVMEGIDAAQKAGIKIKLNAVALKDFNDAEMPEIMRFAHGRGMDLTVIETMPMGEIDEDRTDQYLPLSKLRADLEKQFTLTDIDYQTGGPARYVRVAETGGRLGFITPMTHNFCESCNRVRLTCTGTLYMCLGQNDAADLRAALRATEDDALLHAAIDEAITRKPKGHDFIIDRTHNRPAVARHMSVTGG.

The Radical SAM core domain maps to proline 24–aspartate 242. Residue arginine 33 participates in GTP binding. Residues cysteine 40 and cysteine 44 each coordinate [4Fe-4S] cluster. Tyrosine 46 lines the S-adenosyl-L-methionine pocket. Cysteine 47 provides a ligand contact to [4Fe-4S] cluster. A GTP-binding site is contributed by arginine 82. Glycine 86 contributes to the S-adenosyl-L-methionine binding site. Threonine 115 serves as a coordination point for GTP. Residue serine 139 coordinates S-adenosyl-L-methionine. Lysine 175 serves as a coordination point for GTP. Methionine 209 provides a ligand contact to S-adenosyl-L-methionine. Cysteine 272 and cysteine 275 together coordinate [4Fe-4S] cluster. A GTP-binding site is contributed by arginine 277 to arginine 279. Cysteine 289 is a binding site for [4Fe-4S] cluster.

Belongs to the radical SAM superfamily. MoaA family. As to quaternary structure, monomer and homodimer. [4Fe-4S] cluster is required as a cofactor.

The catalysed reaction is GTP + AH2 + S-adenosyl-L-methionine = (8S)-3',8-cyclo-7,8-dihydroguanosine 5'-triphosphate + 5'-deoxyadenosine + L-methionine + A + H(+). The protein operates within cofactor biosynthesis; molybdopterin biosynthesis. Functionally, catalyzes the cyclization of GTP to (8S)-3',8-cyclo-7,8-dihydroguanosine 5'-triphosphate. In Rhizobium leguminosarum bv. trifolii (strain WSM2304), this protein is GTP 3',8-cyclase.